Reading from the N-terminus, the 716-residue chain is Phosphoribosylformylglycinamidine synthase subunit PurL (716 aa).

The active site involves His33. Residue Tyr36 participates in ATP binding. Glu77 is a Mg(2+) binding site. Substrate is bound by residues 78–81 (SHNH) and Arg100. The active-site Proton acceptor is the His79. Asp101 contacts Mg(2+). Gln225 lines the substrate pocket. Residue Asp253 coordinates Mg(2+). A substrate-binding site is contributed by 297–299 (ESQ). Residues Asn475 and Gly512 each contribute to the ATP site. Asn513 is a binding site for Mg(2+). Ser515 contacts substrate.

It belongs to the FGAMS family. Monomer. Part of the FGAM synthase complex composed of 1 PurL, 1 PurQ and 2 PurS subunits.

The protein resides in the cytoplasm. The enzyme catalyses N(2)-formyl-N(1)-(5-phospho-beta-D-ribosyl)glycinamide + L-glutamine + ATP + H2O = 2-formamido-N(1)-(5-O-phospho-beta-D-ribosyl)acetamidine + L-glutamate + ADP + phosphate + H(+). It functions in the pathway purine metabolism; IMP biosynthesis via de novo pathway; 5-amino-1-(5-phospho-D-ribosyl)imidazole from N(2)-formyl-N(1)-(5-phospho-D-ribosyl)glycinamide: step 1/2. In terms of biological role, part of the phosphoribosylformylglycinamidine synthase complex involved in the purines biosynthetic pathway. Catalyzes the ATP-dependent conversion of formylglycinamide ribonucleotide (FGAR) and glutamine to yield formylglycinamidine ribonucleotide (FGAM) and glutamate. The FGAM synthase complex is composed of three subunits. PurQ produces an ammonia molecule by converting glutamine to glutamate. PurL transfers the ammonia molecule to FGAR to form FGAM in an ATP-dependent manner. PurS interacts with PurQ and PurL and is thought to assist in the transfer of the ammonia molecule from PurQ to PurL. The polypeptide is Phosphoribosylformylglycinamidine synthase subunit PurL (Methanosarcina mazei (strain ATCC BAA-159 / DSM 3647 / Goe1 / Go1 / JCM 11833 / OCM 88) (Methanosarcina frisia)).